A 351-amino-acid polypeptide reads, in one-letter code: uncharacterized protein (351 aa).

Positions 1-27 (MKNKKRVLIASSLSCAILLLSAATTQA) are cleaved as a signal peptide. A disordered region spans residues 28–71 (NSAHKDSQDQNKKEHVDKSQQKDKRNVTNKDKNSTVPDDIGKNG). A compositionally biased stretch (basic and acidic residues) spans 30 to 60 (AHKDSQDQNKKEHVDKSQQKDKRNVTNKDKN).

The protein belongs to the aerolysin family.

This is an uncharacterized protein from Staphylococcus aureus (strain N315).